The chain runs to 199 residues: Charged multivesicular body protein 1b (199 aa).

Coiled-coil stretches lie at residues 15-42 and 178-199; these read AKEL…AIQK and TSVA…RDQV. The segment at 167–199 is disordered; it reads ELPQGQTGSVGTSVASTEQDELSQRLARLRDQV. The segment covering 170 to 183 has biased composition (polar residues); that stretch reads QGQTGSVGTSVAST. The MIT-interacting motif motif lies at 186 to 196; it reads DELSQRLARLR.

This sequence belongs to the SNF7 family.

Its subcellular location is the cytoplasm. It is found in the cytosol. The protein resides in the endosome. It localises to the late endosome membrane. In terms of biological role, probable peripherally associated component of the endosomal sorting required for transport complex III (ESCRT-III) which is involved in multivesicular bodies (MVBs) formation and sorting of endosomal cargo proteins into MVBs. MVBs contain intraluminal vesicles (ILVs) that are generated by invagination and scission from the limiting membrane of the endosome and mostly are delivered to lysosomes enabling degradation of membrane proteins, such as stimulated growth factor receptors, lysosomal enzymes and lipids. The chain is Charged multivesicular body protein 1b (chmp1b) from Xenopus tropicalis (Western clawed frog).